Consider the following 235-residue polypeptide: Ubiquinone/menaquinone biosynthesis C-methyltransferase UbiE (235 aa).

Residues threonine 60, aspartate 81, and serine 126 each contribute to the S-adenosyl-L-methionine site.

The protein belongs to the class I-like SAM-binding methyltransferase superfamily. MenG/UbiE family.

The enzyme catalyses a 2-demethylmenaquinol + S-adenosyl-L-methionine = a menaquinol + S-adenosyl-L-homocysteine + H(+). The catalysed reaction is a 2-methoxy-6-(all-trans-polyprenyl)benzene-1,4-diol + S-adenosyl-L-methionine = a 5-methoxy-2-methyl-3-(all-trans-polyprenyl)benzene-1,4-diol + S-adenosyl-L-homocysteine + H(+). Its pathway is quinol/quinone metabolism; menaquinone biosynthesis; menaquinol from 1,4-dihydroxy-2-naphthoate: step 2/2. The protein operates within cofactor biosynthesis; ubiquinone biosynthesis. In terms of biological role, methyltransferase required for the conversion of demethylmenaquinol (DMKH2) to menaquinol (MKH2) and the conversion of 2-polyprenyl-6-methoxy-1,4-benzoquinol (DDMQH2) to 2-polyprenyl-3-methyl-6-methoxy-1,4-benzoquinol (DMQH2). In Citrifermentans bemidjiense (strain ATCC BAA-1014 / DSM 16622 / JCM 12645 / Bem) (Geobacter bemidjiensis), this protein is Ubiquinone/menaquinone biosynthesis C-methyltransferase UbiE.